A 378-amino-acid chain; its full sequence is Circumsporozoite protein (378 aa).

Positions 1–22 are cleaved as a signal peptide; that stretch reads MKNFNLLVVSSILLVDLFPTNC. The tract at residues 50–288 is disordered; that stretch reads AQVRQSASRG…AGAGQGQNNE (239 aa). Over residues 65–93 the composition is skewed to basic and acidic residues; the sequence is NPKDEEGADKPKKKEEKKVEPKKPRENKL. The interval 81–89 is required for the binding to heparan sulfate proteoglycans (HSPGs) on the surface of host hepatocytes; that stretch reads KKVEPKKPR. The segment at 92 to 96 is region I; contains the proteolytic cleavage site; that stretch reads KLKQP. The segment covering 96–203 has biased composition (low complexity); it reads PPAGDGAPEG…RAGGQPAAGG (108 aa). A 1-1; truncated repeat occupies 97 to 102; the sequence is PAGDGA. The segment at 97–191 is 11 X 9 AA tandem repeats of P-[AE]-G-D-G-A-P-A-[AG]; it reads PAGDGAPEGD…AAPAGDGAPA (95 aa). 13 tandem repeats follow at residues 103 to 111, 112 to 120, 121 to 129, 130 to 138, 139 to 147, 148 to 156, 157 to 165, 166 to 174, 175 to 183, 184 to 191, 193 to 208, 209 to 224, and 225 to 240. Residues 193–268 are 6 X 16 AA approximate tandem repeats of N-R-A-G-G-Q-P-A-A-G-G-N-Q-A-G-G; the sequence is NRAGGQPAAG…GAQAGGANAG (76 aa). Residues 228–251 are compositionally biased toward low complexity; it reads GGQPAAGGNQAGGQPAAGGNQAGA. A 2-4; approximate; truncated repeat occupies 241–251; it reads QPAAGGNQAGA. A 2-5; approximate; truncated repeat occupies 252–260; sequence QAGGNQAGA. Gly residues-rich tracts occupy residues 252–266 and 274–283; these read QAGGNQAGAQAGGAN and EAGGNAGAGQ. Residues 261 to 268 form a 2-6; approximate; truncated repeat; that stretch reads QAGGANAG. The TSP type-1 domain maps to 304-356; it reads KIRSTLGVEWSPCSVTCGKGVRMRRKVSAANKKPEELDVNDLETEVCTMDKCA. Disulfide bonds link C316–C350 and C320–C355. An O-linked (Fuc) threonine glycan is attached at T319. C355 carries GPI-anchor amidated cysteine lipidation. Positions 356–378 are cleaved as a propeptide — removed in mature form; that stretch reads AGIFNVVSNSLRLVILLVLALFN.

Belongs to the plasmodium circumsporozoite protein family. Post-translationally, during host cell invasion, proteolytically cleaved at the cell membrane in the region I by a papain-like cysteine protease of parasite origin. Cleavage is triggered by the sporozoite contact with highly sulfated heparan sulfate proteoglycans (HSPGs) present on the host hepatocyte cell surface. Cleavage exposes the TSP type-1 (TSR) domain and is required for productive invasion of host hepatocytes but not for adhesion to the host cell membrane. Cleavage is dispensable for sporozoite development in the oocyst, motility and for traversal of host and vector cells. O-glycosylated; maybe by POFUT2.

The protein localises to the cell membrane. Its subcellular location is the cytoplasm. Its function is as follows. Essential sporozoite protein. In the mosquito vector, required for sporozoite development in the oocyst, migration through the vector hemolymph and entry into the vector salivary glands. In the vertebrate host, required for sporozoite migration through the host dermis and infection of host hepatocytes. Binds to highly sulfated heparan sulfate proteoglycans (HSPGs) on the surface of host hepatocytes. In the vertebrate host, binds to highly sulfated heparan sulfate proteoglycans (HSPGs) on the surface of host hepatocytes and is required for sporozoite invasion of the host hepatocytes. The polypeptide is Circumsporozoite protein (Plasmodium cynomolgi (strain Berok)).